Consider the following 151-residue polypeptide: 3-hydroxyacyl-[acyl-carrier-protein] dehydratase FabZ (151 aa).

The active site involves His56.

Belongs to the thioester dehydratase family. FabZ subfamily.

Its subcellular location is the cytoplasm. The enzyme catalyses a (3R)-hydroxyacyl-[ACP] = a (2E)-enoyl-[ACP] + H2O. In terms of biological role, involved in unsaturated fatty acids biosynthesis. Catalyzes the dehydration of short chain beta-hydroxyacyl-ACPs and long chain saturated and unsaturated beta-hydroxyacyl-ACPs. This chain is 3-hydroxyacyl-[acyl-carrier-protein] dehydratase FabZ, found in Rhodopseudomonas palustris (strain BisB18).